Consider the following 486-residue polypeptide: Palmitoleoyl-protein carboxylesterase notum2 (486 aa).

A signal peptide spans 1–18 (MRILEIFAILLILKEVRP). A glycan (N-linked (GlcNAc...) asparagine) is linked at N183. Catalysis depends on charge relay system residues S223, D331, and H380.

Belongs to the pectinacetylesterase family. Notum subfamily.

The protein localises to the secreted. The catalysed reaction is [Wnt protein]-O-(9Z)-hexadecenoyl-L-serine + H2O = [Wnt protein]-L-serine + (9Z)-hexadecenoate + H(+). In terms of biological role, carboxylesterase that acts as a key negative regulator of the Wnt signaling pathway by specifically mediating depalmitoleoylation of WNT proteins. Serine palmitoleoylation of WNT proteins is required for efficient binding to frizzled receptors. This Xenopus laevis (African clawed frog) protein is Palmitoleoyl-protein carboxylesterase notum2.